Here is a 203-residue protein sequence, read N- to C-terminus: Small ribosomal subunit protein uS7 (203 aa).

Positions 1–21 (MSSEAPEPDAPASTDDERVSA) are disordered.

Belongs to the universal ribosomal protein uS7 family. In terms of assembly, part of the 30S ribosomal subunit.

One of the primary rRNA binding proteins, it binds directly to 16S rRNA where it nucleates assembly of the head domain of the 30S subunit. Is located at the subunit interface close to the decoding center. The polypeptide is Small ribosomal subunit protein uS7 (Natronomonas pharaonis (strain ATCC 35678 / DSM 2160 / CIP 103997 / JCM 8858 / NBRC 14720 / NCIMB 2260 / Gabara) (Halobacterium pharaonis)).